Reading from the N-terminus, the 236-residue chain is Large ribosomal subunit protein uL1 (236 aa).

This sequence belongs to the universal ribosomal protein uL1 family. Part of the 50S ribosomal subunit.

Binds directly to 23S rRNA. The L1 stalk is quite mobile in the ribosome, and is involved in E site tRNA release. Functionally, protein L1 is also a translational repressor protein, it controls the translation of the L11 operon by binding to its mRNA. The polypeptide is Large ribosomal subunit protein uL1 (Protochlamydia amoebophila (strain UWE25)).